The following is a 482-amino-acid chain: Carbamoyl phosphate synthase large chain, N-terminal section (482 aa).

Residues methionine 1–aspartate 398 are carboxyphosphate synthetic domain. Arginine 126, arginine 166, glycine 172, glycine 173, glutamate 205, valine 207, glutamate 212, glycine 238, isoleucine 239, histidine 240, glutamine 281, and glutamate 295 together coordinate ATP. The region spanning alanine 130–isoleucine 324 is the ATP-grasp domain. Mg(2+) contacts are provided by glutamine 281, glutamate 295, and asparagine 297. Glutamine 281, glutamate 295, and asparagine 297 together coordinate Mn(2+).

The protein belongs to the CarB family. As to quaternary structure, composed of two chains; the small (or glutamine) chain promotes the hydrolysis of glutamine to ammonia, which is used by the large (or ammonia) chain to synthesize carbamoyl phosphate. Tetramer of heterodimers (alpha,beta)4. The cofactor is Mg(2+). Mn(2+) is required as a cofactor.

It catalyses the reaction hydrogencarbonate + L-glutamine + 2 ATP + H2O = carbamoyl phosphate + L-glutamate + 2 ADP + phosphate + 2 H(+). The enzyme catalyses hydrogencarbonate + NH4(+) + 2 ATP = carbamoyl phosphate + 2 ADP + phosphate + 2 H(+). It participates in amino-acid biosynthesis; L-arginine biosynthesis; carbamoyl phosphate from bicarbonate: step 1/1. The protein operates within pyrimidine metabolism; UMP biosynthesis via de novo pathway; (S)-dihydroorotate from bicarbonate: step 1/3. In terms of biological role, large subunit of the glutamine-dependent carbamoyl phosphate synthetase (CPSase). CPSase catalyzes the formation of carbamoyl phosphate from the ammonia moiety of glutamine, carbonate, and phosphate donated by ATP, constituting the first step of 2 biosynthetic pathways, one leading to arginine and/or urea and the other to pyrimidine nucleotides. The large subunit (synthetase) binds the substrates ammonia (free or transferred from glutamine from the small subunit), hydrogencarbonate and ATP and carries out an ATP-coupled ligase reaction, activating hydrogencarbonate by forming carboxy phosphate which reacts with ammonia to form carbamoyl phosphate. The sequence is that of Carbamoyl phosphate synthase large chain, N-terminal section (carB1) from Methanocaldococcus jannaschii (strain ATCC 43067 / DSM 2661 / JAL-1 / JCM 10045 / NBRC 100440) (Methanococcus jannaschii).